Here is a 243-residue protein sequence, read N- to C-terminus: Pyridoxine 5'-phosphate synthase (243 aa).

Asparagine 9 provides a ligand contact to 3-amino-2-oxopropyl phosphate. 11–12 (DH) contacts 1-deoxy-D-xylulose 5-phosphate. Residue arginine 20 coordinates 3-amino-2-oxopropyl phosphate. Histidine 45 functions as the Proton acceptor in the catalytic mechanism. 1-deoxy-D-xylulose 5-phosphate contacts are provided by arginine 47 and histidine 52. Catalysis depends on glutamate 72, which acts as the Proton acceptor. Residue threonine 102 coordinates 1-deoxy-D-xylulose 5-phosphate. Residue histidine 193 is the Proton donor of the active site. Residues glycine 194 and 215–216 (GH) each bind 3-amino-2-oxopropyl phosphate.

This sequence belongs to the PNP synthase family. As to quaternary structure, homooctamer; tetramer of dimers.

Its subcellular location is the cytoplasm. The enzyme catalyses 3-amino-2-oxopropyl phosphate + 1-deoxy-D-xylulose 5-phosphate = pyridoxine 5'-phosphate + phosphate + 2 H2O + H(+). Its pathway is cofactor biosynthesis; pyridoxine 5'-phosphate biosynthesis; pyridoxine 5'-phosphate from D-erythrose 4-phosphate: step 5/5. Its function is as follows. Catalyzes the complicated ring closure reaction between the two acyclic compounds 1-deoxy-D-xylulose-5-phosphate (DXP) and 3-amino-2-oxopropyl phosphate (1-amino-acetone-3-phosphate or AAP) to form pyridoxine 5'-phosphate (PNP) and inorganic phosphate. The chain is Pyridoxine 5'-phosphate synthase from Vibrio cholerae serotype O1 (strain ATCC 39315 / El Tor Inaba N16961).